The primary structure comprises 416 residues: Tyrosine--tRNA ligase (416 aa).

Residue tyrosine 34 coordinates L-tyrosine. Positions 39-48 match the 'HIGH' region motif; it reads PTGDSLHIGH. Positions 165 and 169 each coordinate L-tyrosine. The 'KMSKS' region signature appears at 227 to 231; the sequence is KFGKT. Lysine 230 is a binding site for ATP. The 68-residue stretch at 349 to 416 folds into the S4 RNA-binding domain; the sequence is KNIVEWLVDT…KKKYFLARVK (68 aa).

Belongs to the class-I aminoacyl-tRNA synthetase family. TyrS type 1 subfamily. Homodimer.

It localises to the cytoplasm. It catalyses the reaction tRNA(Tyr) + L-tyrosine + ATP = L-tyrosyl-tRNA(Tyr) + AMP + diphosphate + H(+). In terms of biological role, catalyzes the attachment of tyrosine to tRNA(Tyr) in a two-step reaction: tyrosine is first activated by ATP to form Tyr-AMP and then transferred to the acceptor end of tRNA(Tyr). The chain is Tyrosine--tRNA ligase from Ligilactobacillus salivarius (strain UCC118) (Lactobacillus salivarius).